We begin with the raw amino-acid sequence, 546 residues long: Chaperonin GroEL (546 aa).

ATP is bound by residues 29–32, lysine 50, 86–90, glycine 414, and aspartate 494; these read TLGP and DGTTT. The disordered stretch occupies residues 525–546; sequence KKESAAPAMPGHDGMGGMGGMM. Residues 537 to 546 are compositionally biased toward gly residues; that stretch reads DGMGGMGGMM.

Belongs to the chaperonin (HSP60) family. In terms of assembly, forms a cylinder of 14 subunits composed of two heptameric rings stacked back-to-back. Interacts with the co-chaperonin GroES.

The protein resides in the cytoplasm. It catalyses the reaction ATP + H2O + a folded polypeptide = ADP + phosphate + an unfolded polypeptide.. Its function is as follows. Together with its co-chaperonin GroES, plays an essential role in assisting protein folding. The GroEL-GroES system forms a nano-cage that allows encapsulation of the non-native substrate proteins and provides a physical environment optimized to promote and accelerate protein folding. The polypeptide is Chaperonin GroEL (Bdellovibrio bacteriovorus (strain ATCC 15356 / DSM 50701 / NCIMB 9529 / HD100)).